A 573-amino-acid chain; its full sequence is MTLSGKRISKGIGIGEVLCIRKNFDKIISREKIDFSQVDSEISKFNKAKSKAIEALRDLERKAMLQFGDDKKGIFEGQVLIVEDDELDELVIELIVKENYSAAYSIYLAFENLVKSVEDYKDPYLKERASDYKDIRNRLISIILGQVSDFSEINKDIILVTEELTPSDTMQFDLNYVKGFLTAVGGETSHAAILARTMGLPALVMTLSDIDALKDGDKIVIDAMSSIVIKNPSSDEINLYEGKILRQVELEKELFSLKDKDAETKDGTKVFLKANIGTPVDITYVNKYGVEGIGLFRTEFLYMRSLQPPTEDEQFETYKRVIETMEKKGVVTIRTLDVGGDKEIPYLNFKKEENPFLGFRALRMYKEYEELIQAQFNAIFRASHYGKIRVMVPMLTIYEEIETIEYFVNNAKINLKSRGLPFDENLEVGCMIEVPSAALISSKLANKLKFFSIGTNDLTQYVLAVDRGNQKISNLYDKYNPAVLKLIKKVLDDGVSSGIDVSVCGELGGDDAGALLLVGLGFRSLSMIPSATLRIKYLLKKYTIMELEELANKVLNSDSKQETLSYFDKFIGD.

Histidine 190 serves as the catalytic Tele-phosphohistidine intermediate. The phosphoenolpyruvate site is built by arginine 297 and arginine 334. Glutamate 433 and aspartate 457 together coordinate Mg(2+). Residues 456-457 and arginine 467 contribute to the phosphoenolpyruvate site; that span reads ND. Cysteine 504 acts as the Proton donor in catalysis.

It belongs to the PEP-utilizing enzyme family. As to quaternary structure, homodimer. Requires Mg(2+) as cofactor.

Its subcellular location is the cytoplasm. The catalysed reaction is L-histidyl-[protein] + phosphoenolpyruvate = N(pros)-phospho-L-histidyl-[protein] + pyruvate. Its function is as follows. General (non sugar-specific) component of the phosphoenolpyruvate-dependent sugar phosphotransferase system (sugar PTS). This major carbohydrate active-transport system catalyzes the phosphorylation of incoming sugar substrates concomitantly with their translocation across the cell membrane. Enzyme I transfers the phosphoryl group from phosphoenolpyruvate (PEP) to the phosphoryl carrier protein (HPr). The sequence is that of Phosphoenolpyruvate-protein phosphotransferase (ptsI) from Borreliella burgdorferi (strain ATCC 35210 / DSM 4680 / CIP 102532 / B31) (Borrelia burgdorferi).